Reading from the N-terminus, the 473-residue chain is Aspartyl/glutamyl-tRNA(Asn/Gln) amidotransferase subunit B (473 aa).

Belongs to the GatB/GatE family. GatB subfamily. As to quaternary structure, heterotrimer of A, B and C subunits.

The catalysed reaction is L-glutamyl-tRNA(Gln) + L-glutamine + ATP + H2O = L-glutaminyl-tRNA(Gln) + L-glutamate + ADP + phosphate + H(+). It catalyses the reaction L-aspartyl-tRNA(Asn) + L-glutamine + ATP + H2O = L-asparaginyl-tRNA(Asn) + L-glutamate + ADP + phosphate + 2 H(+). In terms of biological role, allows the formation of correctly charged Asn-tRNA(Asn) or Gln-tRNA(Gln) through the transamidation of misacylated Asp-tRNA(Asn) or Glu-tRNA(Gln) in organisms which lack either or both of asparaginyl-tRNA or glutaminyl-tRNA synthetases. The reaction takes place in the presence of glutamine and ATP through an activated phospho-Asp-tRNA(Asn) or phospho-Glu-tRNA(Gln). This is Aspartyl/glutamyl-tRNA(Asn/Gln) amidotransferase subunit B from Wolbachia sp. subsp. Drosophila simulans (strain wRi).